The following is a 161-amino-acid chain: Large ribosomal subunit protein uL10 (161 aa).

Belongs to the universal ribosomal protein uL10 family. In terms of assembly, part of the ribosomal stalk of the 50S ribosomal subunit. The N-terminus interacts with L11 and the large rRNA to form the base of the stalk. The C-terminus forms an elongated spine to which L12 dimers bind in a sequential fashion forming a multimeric L10(L12)X complex.

In terms of biological role, forms part of the ribosomal stalk, playing a central role in the interaction of the ribosome with GTP-bound translation factors. The protein is Large ribosomal subunit protein uL10 of Campylobacter fetus subsp. fetus (strain 82-40).